The chain runs to 671 residues: Beta-galactosidase 1 (671 aa).

Residues M1–C18 form the signal peptide. E200 (proton donor) is an active-site residue. Residue N228 is glycosylated (N-linked (GlcNAc...) asparagine). E288 functions as the Nucleophile in the catalytic mechanism. N321, N391, N400, N499, N509, N564, and N595 each carry an N-linked (GlcNAc...) asparagine glycan.

It belongs to the glycosyl hydrolase 35 family.

It is found in the lysosome. It catalyses the reaction Hydrolysis of terminal non-reducing beta-D-galactose residues in beta-D-galactosides.. Its function is as follows. Cleaves beta-linked terminal galactosyl residues from gangliosides, glycoproteins, and glycosaminoglycans. The chain is Beta-galactosidase 1 (glb1) from Dictyostelium discoideum (Social amoeba).